Consider the following 54-residue polypeptide: Sperm protamine P3 (54 aa).

Residues 1 to 54 (RRRRRRGKGKGGKKKKGKKRRRRGRKGKGKGKKKGKRKGKRGGKRRRRRRKGKK) are disordered.

In terms of tissue distribution, gonads.

Its subcellular location is the nucleus. The protein localises to the chromosome. In terms of biological role, protamines substitute for histones in the chromatin of sperm during the haploid phase of spermatogenesis. They compact sperm DNA into a highly condensed, stable and inactive complex. This chain is Sperm protamine P3, found in Bolinus brandaris (Purple dye murex).